Reading from the N-terminus, the 487-residue chain is MKSMIEGVKKDGKKGRRNDRKDSWDKDGFTQRGRAEKKPVDLAKIQGIQGQIGIGKNKGDGNRLDCGMDKEEAEDGKDIMRCRHLSPGGGGMKRLLSEDVRETEGIGWESLGLGPVLLKRIRDIGYDFPSPVQVASIPHVLGGKNLLVRSKNGTGKTASYIVPMLNMINSSELSIQGIILVPIRELALQISRNVKRMSEGTGVISAPVVGGTSMQDDIIRVSNGVHVMVGTPGRIVDLVEKRVGTLSKRVILVFDEADKLLDVTFGETVTKLLDLLPREKQMLLYSATFPYFVTGFIRRYMKNPLCINLMKELAPVGVKQFYTYVKPSEKLLCLKSLLLRLSINQCVIFCNSIKTVELLAMKITEMGLPSYFIHSKMAQEDRNIVFHNFLKGKCKILVATDLITRGVDAPNTNYVINFDISKSPESYLHRIGRAGRFGAPGVAISLVTTEEKEMLMDIEAKLGKEISPLSDKGLSRLHESNIDRNQG.

Residues 1–42 (MKSMIEGVKKDGKKGRRNDRKDSWDKDGFTQRGRAEKKPVDL) form a disordered region. The span at 19–41 (DRKDSWDKDGFTQRGRAEKKPVD) shows a compositional bias: basic and acidic residues. The Q motif motif lies at 106–134 (IGWESLGLGPVLLKRIRDIGYDFPSPVQV). Residues 137–307 (IPHVLGGKNL…RRYMKNPLCI (171 aa)) form the Helicase ATP-binding domain. 150–157 (SKNGTGKT) lines the ATP pocket. The short motif at 255–258 (DEAD) is the DEAD box element. A Helicase C-terminal domain is found at 317-478 (GVKQFYTYVK…LSDKGLSRLH (162 aa)).

This sequence belongs to the DEAD box helicase family. DDX6/DHH1 subfamily.

The protein localises to the cytoplasm. The protein resides in the P-body. The enzyme catalyses ATP + H2O = ADP + phosphate + H(+). Its function is as follows. ATP-dependent RNA helicase involved in mRNA turnover, and more specifically in mRNA decapping. Is involved in G1/S DNA-damage checkpoint recovery, probably through the regulation of the translational status of a subset of mRNAs. May also have a role in translation and mRNA nuclear export. In Encephalitozoon cuniculi (strain GB-M1) (Microsporidian parasite), this protein is ATP-dependent RNA helicase DHH1 (DHH1).